The sequence spans 132 residues: Small ribosomal subunit protein uS8 (132 aa).

It belongs to the universal ribosomal protein uS8 family. In terms of assembly, part of the 30S ribosomal subunit. Contacts proteins S5 and S12.

In terms of biological role, one of the primary rRNA binding proteins, it binds directly to 16S rRNA central domain where it helps coordinate assembly of the platform of the 30S subunit. The chain is Small ribosomal subunit protein uS8 from Bacillus mycoides (strain KBAB4) (Bacillus weihenstephanensis).